Consider the following 415-residue polypeptide: Procollagen C-endopeptidase enhancer 2 (415 aa).

The first 23 residues, 1–23 (MRGANAWAPLCLLLAAATQLSRQ), serve as a signal peptide directing secretion. Intrachain disulfides connect cysteine 33–cysteine 59, cysteine 86–cysteine 107, cysteine 154–cysteine 181, cysteine 208–cysteine 231, cysteine 297–cysteine 364, cysteine 301–cysteine 367, and cysteine 312–cysteine 415. CUB domains lie at 33 to 144 (CGGI…FSAA) and 154 to 268 (CGGL…YIFR). Residues 297–415 (CQQKCRRTGT…LLDALKNKQC (119 aa)) enclose the NTR domain. Asparagine 355 is a glycosylation site (N-linked (GlcNAc...) asparagine).

Interacts with heparin with high affinity, and type I or II collagen. Post-translationally, O-glycosylated; contains sialic acid. As to expression, highly expressed in the heart, trabecular meshwork, pituitary gland, bladder, mammary gland, trachea and placenta and weakly expressed in the brain. Expressed in cartilage.

The protein resides in the secreted. Binds to the C-terminal propeptide of types I and II procollagens and may enhance the cleavage of that propeptide by BMP1. The sequence is that of Procollagen C-endopeptidase enhancer 2 (PCOLCE2) from Homo sapiens (Human).